The chain runs to 136 residues: Classical arabinogalactan protein 26 (136 aa).

A signal peptide spans 1–21 (MSVSLFTAFTVLSLCLHTSTS). The segment at 38–95 (APSSFSASTPAMSPDTSPLFPTPGSSEMSPSPSESSIMPTIPSSLSPPNPDAVTPDPL) is disordered. The span at 40-53 (SSFSASTPAMSPDT) shows a compositional bias: polar residues. Residues 59-81 (TPGSSEMSPSPSESSIMPTIPSS) are compositionally biased toward low complexity. The GPI-anchor amidated serine moiety is linked to residue Ser-108. Positions 109–136 (SSVCLVSSQLSSLLLVLLMLLLAFCSFF) are cleaved as a propeptide — removed in mature form.

It belongs to the classical AGP family. Post-translationally, O-glycosylated on the hydroxyproline residues.

The protein resides in the cell membrane. Proteoglycan that seems to be implicated in diverse developmental roles such as differentiation, cell-cell recognition, embryogenesis and programmed cell death. This is Classical arabinogalactan protein 26 (AGP26) from Arabidopsis thaliana (Mouse-ear cress).